A 247-amino-acid chain; its full sequence is ATP synthase subunit a, chloroplastic (247 aa).

Transmembrane regions (helical) follow at residues 38-58 (QVLI…ILVV), 95-115 (VPFI…GALL), 134-154 (INTT…AGIS), 199-219 (LVVV…VMFL), and 220-240 (GLFT…AYIG).

This sequence belongs to the ATPase A chain family. In terms of assembly, F-type ATPases have 2 components, CF(1) - the catalytic core - and CF(0) - the membrane proton channel. CF(1) has five subunits: alpha(3), beta(3), gamma(1), delta(1), epsilon(1). CF(0) has four main subunits: a, b, b' and c.

Its subcellular location is the plastid. It is found in the chloroplast thylakoid membrane. Its function is as follows. Key component of the proton channel; it plays a direct role in the translocation of protons across the membrane. This chain is ATP synthase subunit a, chloroplastic, found in Cicer arietinum (Chickpea).